Consider the following 99-residue polypeptide: Fetal and adult testis-expressed transcript protein homolog (99 aa).

Residues 79–98 (AALFTLLVSVCIANLWLWVH) traverse the membrane as a helical segment.

As to quaternary structure, interacts with BIK and RNF183. Interacts with IMMT/MIC60and EMD.

It localises to the mitochondrion. It is found in the mitochondrion outer membrane. The protein resides in the endoplasmic reticulum membrane. Its function is as follows. Involved in the regulation of endoplasmic reticulum (ER)-mitochondria coupling. Negatively regulates the ER-mitochondria distance and Ca(2+) transfer from ER to mitochondria possibly implicating it in the regulation of apoptosis. May collaborate with RNF183 to restrain BIK protein levels thus regulating apoptotic signaling. This Mus musculus (Mouse) protein is Fetal and adult testis-expressed transcript protein homolog (Fate1).